The sequence spans 492 residues: Polyamine oxidase 5 (492 aa).

FAD-binding residues include glutamate 55, arginine 63, valine 244, and glutamate 431. Residues 490-492 (SRL) carry the Microbody targeting signal motif.

This sequence belongs to the flavin monoamine oxidase family. It depends on FAD as a cofactor. As to expression, widely expressed.

It localises to the peroxisome. The enzyme catalyses spermine + O2 + H2O = 3-aminopropanal + spermidine + H2O2. The catalysed reaction is norspermine + O2 + H2O = norspermidine + 3-aminopropanal + H2O2. It catalyses the reaction thermospermine + O2 + H2O = 3-aminopropanal + spermidine + H2O2. The protein operates within amine and polyamine degradation; spermine degradation. Functionally, flavoenzyme involved in polyamine back-conversion. Catalyzes the oxidation of the secondary amino group of polyamines, such as spermine. Substrate preference is spermine &gt; thermospermine &gt; norspermine. No activity detected when putrescine, spermidine or N(1)-acetylspermidine are used as substrates. Plays an important role in the regulation of polyamine intracellular concentration. May play a role in producing hydrogen peroxide during seed germination. The sequence is that of Polyamine oxidase 5 from Oryza sativa subsp. japonica (Rice).